The primary structure comprises 294 residues: Diphthine synthase (294 aa).

S-adenosyl-L-methionine is bound by residues aspartate 93, valine 96, 121 to 122 (SG), leucine 173, and alanine 220.

It belongs to the diphthine synthase family. Homodimer.

It catalyses the reaction 2-[(3S)-amino-3-carboxypropyl]-L-histidyl-[translation elongation factor 2] + 3 S-adenosyl-L-methionine = diphthine-[translation elongation factor 2] + 3 S-adenosyl-L-homocysteine + 3 H(+). The protein operates within protein modification; peptidyl-diphthamide biosynthesis. Its function is as follows. S-adenosyl-L-methionine-dependent methyltransferase that catalyzes the trimethylation of the amino group of the modified target histidine residue in translation elongation factor 2 (EF-2), to form an intermediate called diphthine. The three successive methylation reactions represent the second step of diphthamide biosynthesis. The sequence is that of Diphthine synthase (dphB) from Aeropyrum pernix (strain ATCC 700893 / DSM 11879 / JCM 9820 / NBRC 100138 / K1).